A 471-amino-acid chain; its full sequence is Methyltransferase OMS1, mitochondrial (471 aa).

A mitochondrion-targeting transit peptide spans 1–39 (MIVFRRFPTCLLHHIRQPASRSLLLESQRRSLSFTSYKY). At 40-103 (NSSHIDDDKS…AIARSEKFSK (64 aa)) the chain is on the mitochondrial matrix side. The chain crosses the membrane as a helical span at residues 104-123 (GMTKYMIGAYVIFLIYGLFF). The Mitochondrial intermembrane segment spans residues 124-471 (TKKLFAKDKE…LEPVPPVSKS (348 aa)). Residues 450-463 (FEKKDDMASKKELE) show a composition bias toward basic and acidic residues. A disordered region spans residues 450–471 (FEKKDDMASKKELEPVPPVSKS).

The protein belongs to the methyltransferase superfamily. METL family.

It localises to the mitochondrion inner membrane. Mitochondrial methyltransferase which suppresses respiratory defects caused by OXA1 mutations when overexpressed. The protein is Methyltransferase OMS1, mitochondrial (OMS1) of Saccharomyces cerevisiae (strain ATCC 204508 / S288c) (Baker's yeast).